The following is a 332-amino-acid chain: MLLKEYRICMPLTVDEYKIGQLYMISKHSHEQSDRGEGVEVVQNEPFEDPHHGNGQFTEKRVYLNSKLPSWARAVVPKIFYVTEKAWNYYPYTITEYTCSFLPKFSIHIETKYEDNKGSNDSIFDSEAKDLEREVCFIDIACDEIPERYYKESEDPKHFKSEKTGRGQLREGWRDNHQPIMCSYKLVTVKFEVWGLQTRVEQFVHKVVRDILLIGHRQAFAWVDEWYDMTMDEVREFERATQEATNKKIGVFPPAISISSIALLPSSVRSAPSSAPSTPLSTDAPEFLSIPKDRPRKKSAPETLTLPDPEKKATLNLPGVYTSEKPCRPKSE.

Phosphoserine occurs at positions 119, 122, 270, and 274. Residues 272–281 show a composition bias toward low complexity; that stretch reads PSSAPSTPLS. Positions 272 to 332 are disordered; that stretch reads PSSAPSTPLS…SEKPCRPKSE (61 aa). Threonine 278 bears the Phosphothreonine mark.

The protein belongs to the PtdIns transfer protein family. PI transfer class IIB subfamily. In terms of tissue distribution, widely expressed in brain, with expression in the gray matters of pre- and postnatal brains. Weakly expressed in brain and is rather confined to the embryonic stage.

It is found in the cytoplasm. The protein localises to the nucleus. It carries out the reaction a 1,2-diacyl-sn-glycero-3-phospho-(1D-myo-inositol)(in) = a 1,2-diacyl-sn-glycero-3-phospho-(1D-myo-inositol)(out). It catalyses the reaction a 1,2-diacyl-sn-glycero-3-phosphate(in) = a 1,2-diacyl-sn-glycero-3-phosphate(out). Catalyzes the transfer of phosphatidylinositol (PI) and phosphatidic acid (PA) between membranes. Binds PA derived from the phospholipase D signaling pathway and among the cellular PA species, preferably binds to the C16:0/16:1 and C16:1/18:1 PA species. Functionally, specifically binds to phosphatidylinositol but not to other phospholipids and may play a role in the phosphoinositide-mediated signaling in the neural development. In Mus musculus (Mouse), this protein is Cytoplasmic phosphatidylinositol transfer protein 1 (Pitpnc1).